Consider the following 134-residue polypeptide: Small ribosomal subunit protein uS9 (134 aa).

Positions 114–134 (QKESKNFGGPGARAKYQKSYR) are disordered.

This sequence belongs to the universal ribosomal protein uS9 family.

The polypeptide is Small ribosomal subunit protein uS9 (Methanosarcina acetivorans (strain ATCC 35395 / DSM 2834 / JCM 12185 / C2A)).